The primary structure comprises 405 residues: Eukaryotic initiation factor 4A (405 aa).

Residues 32–60 (PTFESMGLREELLRGIFNYGFEKPSAIQQ) carry the Q motif motif. Residues 63–233 (ILPIIKGRDT…EKFMTKPVRI (171 aa)) form the Helicase ATP-binding domain. An ATP-binding site is contributed by 76–83 (AQSGTGKT). A DEAD box motif is present at residues 181–184 (DEAD). The Helicase C-terminal domain occupies 244-405 (GIKQFFVSVE…EMPVNFASII (162 aa)).

This sequence belongs to the DEAD box helicase family. eIF4A subfamily.

The protein localises to the cytoplasm. The catalysed reaction is ATP + H2O = ADP + phosphate + H(+). ATP-dependent RNA helicase which is a subunit of the eIF4F complex involved in cap recognition and is required for mRNA binding to ribosome. In the current model of translation initiation, eIF4A unwinds RNA secondary structures in the 5'-UTR of mRNAs which is necessary to allow efficient binding of the small ribosomal subunit, and subsequent scanning for the initiator codon. In Dictyostelium discoideum (Social amoeba), this protein is Eukaryotic initiation factor 4A (tifA).